The primary structure comprises 470 residues: Glutamate--tRNA ligase (470 aa).

Residues 9–19 (PSPTGFLHVGG) carry the 'HIGH' region motif. The 'KMSKS' region signature appears at 236–240 (RLSKR). Position 239 (lysine 239) interacts with ATP.

It belongs to the class-I aminoacyl-tRNA synthetase family. Glutamate--tRNA ligase type 1 subfamily. In terms of assembly, monomer.

It is found in the cytoplasm. The catalysed reaction is tRNA(Glu) + L-glutamate + ATP = L-glutamyl-tRNA(Glu) + AMP + diphosphate. Functionally, catalyzes the attachment of glutamate to tRNA(Glu) in a two-step reaction: glutamate is first activated by ATP to form Glu-AMP and then transferred to the acceptor end of tRNA(Glu). This is Glutamate--tRNA ligase from Legionella pneumophila (strain Paris).